The following is a 350-amino-acid chain: GDSL esterase/lipase At2g42990 (350 aa).

A signal peptide spans 1 to 24 (MATHYLSPSILCIILTTLVSIAGA). Residue serine 35 is the Nucleophile of the active site. N-linked (GlcNAc...) asparagine glycosylation is found at asparagine 98, asparagine 117, and asparagine 141. Catalysis depends on residues aspartate 325 and histidine 328.

The protein belongs to the 'GDSL' lipolytic enzyme family.

Its subcellular location is the secreted. This Arabidopsis thaliana (Mouse-ear cress) protein is GDSL esterase/lipase At2g42990.